The following is a 31-amino-acid chain: Morintide mO3 (31 aa).

The region spanning 1–30 is the Chitin-binding type-1 domain; the sequence is NRLCCSQYGFCGTTSEYCSRANGCQSNCWG. 2 cysteine pairs are disulfide-bonded: C4-C18 and C24-C28.

Seeds (at protein level).

Functionally, chitin-binding protein which functions in defense against chitin-containing fungal pathogens. The polypeptide is Morintide mO3 (Moringa oleifera (Horseradish tree)).